The sequence spans 115 residues: Large ribosomal subunit protein uL22 (115 aa).

This sequence belongs to the universal ribosomal protein uL22 family. In terms of assembly, part of the 50S ribosomal subunit.

Its function is as follows. This protein binds specifically to 23S rRNA; its binding is stimulated by other ribosomal proteins, e.g. L4, L17, and L20. It is important during the early stages of 50S assembly. It makes multiple contacts with different domains of the 23S rRNA in the assembled 50S subunit and ribosome. Functionally, the globular domain of the protein is located near the polypeptide exit tunnel on the outside of the subunit, while an extended beta-hairpin is found that lines the wall of the exit tunnel in the center of the 70S ribosome. This Lactococcus lactis subsp. lactis (strain IL1403) (Streptococcus lactis) protein is Large ribosomal subunit protein uL22.